Here is a 679-residue protein sequence, read N- to C-terminus: Acetyl-coenzyme A synthetase 2 (679 aa).

Residues 1-32 (MTSSPTHQVVHEANNIKKQETPKEFFERQPRQ) form a disordered region. Over residues 14–30 (NNIKKQETPKEFFERQP) the composition is skewed to basic and acidic residues. CoA-binding positions include 207–210 (RGGK) and Thr326. ATP is bound by residues 402–404 (GEP), 426–431 (DTYWQT), Asp517, and Arg532. Ser540 is a binding site for CoA. Arg543 is a binding site for ATP. Arg611 is a CoA binding site.

The protein belongs to the ATP-dependent AMP-binding enzyme family.

It catalyses the reaction acetate + ATP + CoA = acetyl-CoA + AMP + diphosphate. The chain is Acetyl-coenzyme A synthetase 2 (ACS2) from Debaryomyces hansenii (strain ATCC 36239 / CBS 767 / BCRC 21394 / JCM 1990 / NBRC 0083 / IGC 2968) (Yeast).